The primary structure comprises 175 residues: Thioredoxin M-type, chloroplastic (175 aa).

Residues 1–62 (MALETCLRGW…ARRPSRFVCK (62 aa)) constitute a chloroplast transit peptide. Residues 63–174 (CKNVVDEVIV…LCTIIDKYIG (112 aa)) enclose the Thioredoxin domain. Residues Cys-98 and Cys-101 are joined by a disulfide bond.

It belongs to the thioredoxin family. Plant M-type subfamily. Forms a complex with heterodimeric ferredoxin-thioredoxin reductase (FTR) and ferredoxin.

The protein localises to the plastid. It localises to the chloroplast. In terms of biological role, participates in various redox reactions through the reversible oxidation of the active center dithiol to a disulfide. The M form is known to activate NADP-malate dehydrogenase. The sequence is that of Thioredoxin M-type, chloroplastic from Triticum aestivum (Wheat).